We begin with the raw amino-acid sequence, 1091 residues long: Voltage-dependent calcium channel subunit alpha-2/delta-1 (1091 aa).

The first 24 residues, 1–24 (MAAGCLLALTLTLFQSWLIGPSSE), serve as a signal peptide directing secretion. Residues 25 to 1061 (EPFPSPVTIK…VLEDYTDCGG (1037 aa)) are Extracellular-facing. N92 is a glycosylation site (N-linked (GlcNAc...) asparagine). A Phosphoserine modification is found at S119. 2 N-linked (GlcNAc...) asparagine glycosylation sites follow: N136 and N184. Residues 252 to 429 (DMLILVDVSG…INTQEYLDVL (178 aa)) enclose the VWFA domain. Positions 258, 260, and 262 each coordinate a divalent metal cation. An MIDAS-like motif motif is present at residues 258-262 (DVSGS). Residues N323 and N347 are each glycosylated (N-linked (GlcNAc...) asparagine). Cysteines 403 and 1047 form a disulfide. The region spanning 445-536 (WTNVYLDALE…QPKNPKSQEP (92 aa)) is the Cache domain. N-linked (GlcNAc...) asparagine glycosylation is found at N593, N769, N876, and N973. A helical membrane pass occupies residues 1062-1082 (VSGLNPSLWSIFGLQFILLWL). Residues 1083 to 1091 (VSGSRHYLW) are Cytoplasmic-facing.

It belongs to the calcium channel subunit alpha-2/delta family. As to quaternary structure, dimer formed of alpha-2-1 and delta-1 chains; disulfide-linked. Voltage-dependent calcium channels are multisubunit complexes, consisting of alpha-1 (CACNA1), alpha-2 (CACNA2D), beta (CACNB) and delta (CACNA2D) subunits in a 1:1:1:1 ratio. Post-translationally, proteolytically processed into subunits alpha-2-1 and delta-1 that are disulfide-linked.

Its subcellular location is the membrane. It is found in the cell membrane. In terms of biological role, the alpha-2/delta subunit of voltage-dependent calcium channels regulates calcium current density and activation/inactivation kinetics of the calcium channel. Plays an important role in excitation-contraction coupling. The chain is Voltage-dependent calcium channel subunit alpha-2/delta-1 (Cacna2d1) from Rattus norvegicus (Rat).